We begin with the raw amino-acid sequence, 138 residues long: Protein NrdI (138 aa).

This sequence belongs to the NrdI family.

Its function is as follows. Probably involved in ribonucleotide reductase function. The chain is Protein NrdI from Mycobacterium leprae (strain TN).